Here is a 646-residue protein sequence, read N- to C-terminus: MSSKRASQYHQVEIPPPQPFLKSLKNTLNEILFADDPFRRIRNESKTSKKIELGLRHVFPILEWARGYSLEYLKSDVISGITIASLAIPQGISYAQLANLPPILGLYSSLVPPLVYAIMGSSRDLAVGTVAVASLLTAAMLGKEVNAVVNPKLYLHLAFTATFFAGLMQTCLGLLRLGFVVEILSHAAIVGFMGGAATVVCLQQLKGLLGLHHFTHSTDIVTVLRSIFSQSHMWRWESGVLGCCFLIFLLTTKYISKKRPKLFWISAMSPLVSVIFGTIFLYFLHDQFHGIQFIGELKKGINPPSITHLVFTPPYVMLALKVGIITGVIALAEGIAVGRSFAMYKNYNIDGNKEMIAFGMMNILGSFSSCYLTTGPFSRSAVNYNAGCKTALSNVVMAVAVAVTLLFLTPLFFYTPLVVLSSIIIAAMLGLVDYEAAIHLWKLDKFDFFVCLSAYLGVVFGTIEIGLILSVGISVMRLVLFVGRPKIYVMGNIQNSEIYRNIEHYPQAITRSSLLILHIDGPIYFANSTYLRDRIGRWIDEEEDKLRTSGDISLQYIVLDMSAVGNIDTSGISMLEELNKILGRRELKLVIANPGAEVMKKLSKSTFIESIGKERIYLTVAEAVAACDFMLHTAKPDSPVPEFNNV.

Topologically, residues Met-1–Asp-76 are cytoplasmic. The chain crosses the membrane as a helical span at residues Val-77–Leu-97. The Extracellular segment spans residues Ala-98–Asn-99. A helical transmembrane segment spans residues Leu-100–Gly-120. Over Ser-121–Asp-124 the chain is Cytoplasmic. A helical membrane pass occupies residues Leu-125–Val-145. Topologically, residues Asn-146–Tyr-154 are extracellular. A helical transmembrane segment spans residues Leu-155 to Leu-175. Residue Arg-176 is a topological domain, cytoplasmic. The chain crosses the membrane as a helical span at residues Leu-177–Ala-197. Residues Thr-198 to Arg-235 lie on the Extracellular side of the membrane. The chain crosses the membrane as a helical span at residues Trp-236–Ser-256. The Cytoplasmic portion of the chain corresponds to Lys-257–Leu-262. A helical transmembrane segment spans residues Phe-263 to Phe-283. Topologically, residues Leu-284–Tyr-315 are extracellular. The chain crosses the membrane as a helical span at residues Val-316–Ala-336. The Cytoplasmic segment spans residues Val-337 to Glu-354. Residues Met-355–Gly-375 traverse the membrane as a helical segment. Topologically, residues Pro-376 to Thr-390 are extracellular. Helical transmembrane passes span Ala-391–Leu-411 and Phe-412–Val-432. Topologically, residues Asp-433–Asp-447 are extracellular. A helical transmembrane segment spans residues Phe-448–Ile-468. At Leu-469–Val-646 the chain is on the cytoplasmic side. The STAS domain maps to His-504–Cys-627.

It belongs to the SLC26A/SulP transporter (TC 2.A.53) family. Expressed only in leaves.

The protein localises to the membrane. H(+)/sulfate cotransporter that may play a role in the regulation of sulfate assimilation. This is Sulfate transporter 3.2 (SULTR3;2) from Arabidopsis thaliana (Mouse-ear cress).